We begin with the raw amino-acid sequence, 216 residues long: Protein shisa-5 (216 aa).

The signal sequence occupies residues 1-26 (MAAPAPAPRILVLLLLLLPAPEGAQS). The Extracellular segment spans residues 27 to 93 (ELCMISHGRK…SGFDSDPVAR (67 aa)). The chain crosses the membrane as a helical span at residues 94 to 114 (FGTVIAIGVTLFVIAVVTVIV). The Cytoplasmic portion of the chain corresponds to 115-216 (CCTCSCCCLY…AYMEPPKAVP (102 aa)).

It belongs to the shisa family. Interacts with PDCD6; PDCD6 can stabilize SHISA5.

It is found in the endoplasmic reticulum membrane. It localises to the nucleus membrane. Functionally, can induce apoptosis in a caspase-dependent manner and plays a role in p53/TP53-dependent apoptosis. This Bos taurus (Bovine) protein is Protein shisa-5 (SHISA5).